The following is a 182-amino-acid chain: CDP-diacylglycerol--glycerol-3-phosphate 3-phosphatidyltransferase (182 aa).

At 1–12 (MQLNIPTWLTLF) the chain is on the cytoplasmic side. A helical transmembrane segment spans residues 13–37 (RVVLIPFFVLAFYLPFVWAPMVCAI). Residues 38–60 (IFVFAAATDWFDGFLARRWKQTT) lie on the Periplasmic side of the membrane. Residues 61-81 (RFGAFLDPVADKVMVAIALVL) traverse the membrane as a helical segment. Residues 82–86 (VAEHY) are Cytoplasmic-facing. Residues 87–107 (HVWWITLPAATMIAREIIISS) form a helical membrane-spanning segment. Residues 108–145 (LREWMAEIGKRSSVAVSWIGKVKTTAQMGSLVGLLWRP) are Periplasmic-facing. A helical transmembrane segment spans residues 146 to 168 (DHNIELASFVLLYIAAVLTFWSM). Residues 169 to 181 (FQYLNAAWKDLLE) are Cytoplasmic-facing.

This sequence belongs to the CDP-alcohol phosphatidyltransferase class-I family.

It localises to the cell inner membrane. The catalysed reaction is a CDP-1,2-diacyl-sn-glycerol + sn-glycerol 3-phosphate = a 1,2-diacyl-sn-glycero-3-phospho-(1'-sn-glycero-3'-phosphate) + CMP + H(+). It participates in phospholipid metabolism; phosphatidylglycerol biosynthesis; phosphatidylglycerol from CDP-diacylglycerol: step 1/2. Catalyzes the conversion of cytidine diphosphate diacylglycerol (CDP-DG) and glycerol 3-phosphate into phosphatidylglycerol. Essential for the synthesis of anionic phospholipids, thereby playing a role in balancing the ratio of zwitterionic and anionic phospholipids, which is thought to be important for normal membrane function. The protein is CDP-diacylglycerol--glycerol-3-phosphate 3-phosphatidyltransferase of Yersinia enterocolitica serotype O:8 / biotype 1B (strain NCTC 13174 / 8081).